The chain runs to 450 residues: Probable transporter MCH1 (450 aa).

12 helical membrane passes run 32–52 (AFLV…ISLY), 69–89 (VLFS…GLLS), 96–116 (MLSW…AWVF), 127–147 (VLCF…ALFT), 157–177 (LCSI…GSQL), 199–219 (LAVA…IVTM), 255–275 (PAAY…EMFL), 290–309 (VLPE…GLII), 320–340 (MSVQ…VVLA), 355–375 (LSGA…LAVW), 378–398 (AVFG…SILF), and 423–443 (VFWS…LMYL).

Belongs to the major facilitator superfamily.

It is found in the vacuole membrane. Probable transporter. The sequence is that of Probable transporter MCH1 (MCH1) from Eremothecium gossypii (strain ATCC 10895 / CBS 109.51 / FGSC 9923 / NRRL Y-1056) (Yeast).